Reading from the N-terminus, the 210-residue chain is Large ribosomal subunit protein uL4 (210 aa).

The segment at 57–78 (VSGGGAKPWKQKGTGRARAGSN) is disordered.

It belongs to the universal ribosomal protein uL4 family. As to quaternary structure, part of the 50S ribosomal subunit.

In terms of biological role, one of the primary rRNA binding proteins, this protein initially binds near the 5'-end of the 23S rRNA. It is important during the early stages of 50S assembly. It makes multiple contacts with different domains of the 23S rRNA in the assembled 50S subunit and ribosome. Its function is as follows. Forms part of the polypeptide exit tunnel. The chain is Large ribosomal subunit protein uL4 from Desulfovibrio desulfuricans (strain ATCC 27774 / DSM 6949 / MB).